A 226-amino-acid chain; its full sequence is 26S proteasome non-ATPase regulatory subunit 10 (226 aa).

The required for nuclear localization stretch occupies residues 1–37 (MEGCVSNLMVCNLAYSGKLEELKESILADKSLATRTD). The tract at residues 1–71 (MEGCVSNLMV…LGVPVNDKDD (71 aa)) is interaction with RB1. ANK repeat units lie at residues 3-36 (GCVSNLMVCNLAYSGKLEELKESILADKSLATRT), 37-69 (DQDSRTALHWACSAGHTEIVEFLLQLGVPVNDK), 70-102 (DDAGWSPLHIAASAGRDEIVKALLGKGAQVNAV), 103-135 (NQNGCTPLHYAASKNRHEIAVMLLEGGANPDAK), 136-168 (DHYEATAMHRAAAKGNLKMIHILLYYKASTNIQ), 169-201 (DTEGNTPLHLACDEERVEEAKLLVSQGASIYIE), and 202-226 (NKEEKTPLQVAKGGLGLILKRMVEG). An interaction with RELA region spans residues 39–226 (DSRTALHWAC…GLILKRMVEG (188 aa)). Residues 171-226 (EGNTPLHLACDEERVEEAKLLVSQGASIYIENKEEKTPLQVAKGGLGLILKRMVEG) form an interaction with RB1 region.

In terms of assembly, part of transient complex containing PSMD10, PSMC4, PSMC5 and PAAF1 formed during the assembly of the 26S proteasome. Stays associated throughout the assembly of the PA700/19S RC and is released upon association with the 20S core. Interacts with PSMC4. Interacts with RB1. Interacts with CDK4. Interacts with MDM2. Interacts with RELA. Associates with a CDK4:CCND2 serine/threonine kinase complex. Interacts with ARHGDIA and increases the interaction between ARHGDIA and RHOA, hence promotes ARHGDIA inactivation of RHOA and ROCK. Tends to be up-regulated in cancer cells with RAS mutations, including lung cancers and adenocarconimas (at protein level).

The protein localises to the cytoplasm. The protein resides in the nucleus. In terms of biological role, acts as a chaperone during the assembly of the 26S proteasome, specifically of the PA700/19S regulatory complex (RC). In the initial step of the base subcomplex assembly is part of an intermediate PSMD10:PSMC4:PSMC5:PAAF1 module which probably assembles with a PSMD5:PSMC2:PSMC1:PSMD2 module. Independently of the proteasome, regulates EGF-induced AKT activation through inhibition of the RHOA/ROCK/PTEN pathway, leading to prolonged AKT activation. Plays an important role in RAS-induced tumorigenesis. Its function is as follows. Acts as an proto-oncoprotein by being involved in negative regulation of tumor suppressors RB1 and p53/TP53. Overexpression is leading to phosphorylation of RB1 and proteasomal degradation of RB1. Regulates CDK4-mediated phosphorylation of RB1 by competing with CDKN2A for binding with CDK4. Facilitates binding of MDM2 to p53/TP53 and the mono- and polyubiquitination of p53/TP53 by MDM2 suggesting a function in targeting the TP53:MDM2 complex to the 26S proteasome. Involved in p53-independent apoptosis. Involved in regulation of NF-kappa-B by retaining it in the cytoplasm. Binds to the NF-kappa-B component RELA and accelerates its XPO1/CRM1-mediated nuclear export. The polypeptide is 26S proteasome non-ATPase regulatory subunit 10 (PSMD10) (Homo sapiens (Human)).